The chain runs to 320 residues: Polyadenylate-binding protein-interacting protein 13 (320 aa).

Residues 1–44 form a disordered region; it reads MAVAENVGVKVDSSNNQNIDNNTTSLVETKPSCSDDQTPKSKSS. The segment covering 12–44 has biased composition (polar residues); sequence DSSNNQNIDNNTTSLVETKPSCSDDQTPKSKSS. A PAM2-like motif is present at residues 65 to 75; the sequence is HLNPMAKEFVP. RRM domains lie at 137–212 and 234–310; these read RTVY…MSKT and KTVY…PSKT.

In Arabidopsis thaliana (Mouse-ear cress), this protein is Polyadenylate-binding protein-interacting protein 13 (CID13).